The chain runs to 208 residues: Thymidylate kinase (208 aa).

Residue 9 to 16 (GGEGCGKS) coordinates ATP.

The protein belongs to the thymidylate kinase family.

The enzyme catalyses dTMP + ATP = dTDP + ADP. Functionally, phosphorylation of dTMP to form dTDP in both de novo and salvage pathways of dTTP synthesis. This chain is Thymidylate kinase, found in Dehalococcoides mccartyi (strain ATCC BAA-2100 / JCM 16839 / KCTC 5957 / BAV1).